The following is a 473-amino-acid chain: Zinc finger and SCAN domain-containing protein 21 (473 aa).

Residue Lys-27 forms a Glycyl lysine isopeptide (Lys-Gly) (interchain with G-Cter in SUMO2) linkage. The 83-residue stretch at 45 to 127 (RQRFRQFGYH…TLLEDLEREL (83 aa)) folds into the SCAN box domain. The interval 127 to 171 (LDEPGHQVSTPPNEQKPVWEKISSSGTAKESPSSMQPQPLETSHN) is disordered. Polar residues predominate over residues 148–171 (ISSSGTAKESPSSMQPQPLETSHN). Glycyl lysine isopeptide (Lys-Gly) (interchain with G-Cter in SUMO2) cross-links involve residues Lys-221 and Lys-232. The tract at residues 244–272 (LENEKGTKPPLQEAGSKKGRESVPTKPTP) is disordered. Basic and acidic residues predominate over residues 258–272 (GSKKGRESVPTKPTP). C2H2-type zinc fingers lie at residues 277–299 (YICA…RRTH), 305–327 (YVCT…YRTH), 333–354 (YDCK…QRMH), 360–382 (YQCK…YRIH), 388–410 (YQCN…QRLH), 416–438 (YKCK…HRIH), and 444–466 (YWCH…QRVH). Lys-349 participates in a covalent cross-link: Glycyl lysine isopeptide (Lys-Gly) (interchain with G-Cter in SUMO2).

The protein belongs to the krueppel C2H2-type zinc-finger protein family.

The protein localises to the nucleus. In terms of biological role, strong transcriptional activator. Plays an important role in spermatogenesis; essential for the progression of meiotic prophase I in spermatocytes. In Gorilla gorilla gorilla (Western lowland gorilla), this protein is Zinc finger and SCAN domain-containing protein 21 (ZSCAN21).